The chain runs to 291 residues: Tyramine--L-glutamate ligase (291 aa).

Residues 104 to 274 (KYPVKNLGCS…LAELLIKNAN (171 aa)) enclose the ATP-grasp domain. 131–176 (KDYVKTPKTFKPKKYVIKKIDGCGGKFNLFDENFLIQEFVEGESLS) provides a ligand contact to ATP. Asp236, Glu247, and Asn249 together coordinate Mg(2+). Positions 236, 247, and 249 each coordinate Mn(2+).

Requires Mg(2+) as cofactor. Mn(2+) is required as a cofactor.

The enzyme catalyses tyramine + L-glutamate + ATP = gamma-L-glutamyltyramine + ADP + phosphate + H(+). It participates in cofactor biosynthesis; methanofuran biosynthesis. Catalyzes the formation of an amide bond between tyramine and the gamma carboxy group of L-glutamate. The enzyme also accepts phenylethylamine in vitro. The polypeptide is Tyramine--L-glutamate ligase (Methanocaldococcus fervens (strain DSM 4213 / JCM 15782 / AG86) (Methanococcus fervens)).